The sequence spans 544 residues: Methionine--tRNA ligase (544 aa).

Positions 10–20 (PYANGSLHLGH) match the 'HIGH' region motif. Zn(2+)-binding residues include Cys141, Cys144, Cys153, and Cys156. Positions 329–333 (KLSTS) match the 'KMSKS' region motif. Thr332 is a binding site for ATP.

It belongs to the class-I aminoacyl-tRNA synthetase family. MetG type 1 subfamily. Monomer. Zn(2+) is required as a cofactor.

It is found in the cytoplasm. It catalyses the reaction tRNA(Met) + L-methionine + ATP = L-methionyl-tRNA(Met) + AMP + diphosphate. Is required not only for elongation of protein synthesis but also for the initiation of all mRNA translation through initiator tRNA(fMet) aminoacylation. The polypeptide is Methionine--tRNA ligase (Bacillus cereus (strain Q1)).